We begin with the raw amino-acid sequence, 461 residues long: Alcaligin biosynthesis enzyme (461 aa).

An FAD-binding site is contributed by Val9–Pro15.

Belongs to the lysine N(6)-hydroxylase/L-ornithine N(5)-oxygenase family. It depends on FAD as a cofactor.

Its pathway is siderophore biosynthesis; alcaligin biosynthesis. This Bordetella bronchiseptica (strain ATCC BAA-588 / NCTC 13252 / RB50) (Alcaligenes bronchisepticus) protein is Alcaligin biosynthesis enzyme (alcA).